We begin with the raw amino-acid sequence, 70 residues long: Protein SlyX homolog (70 aa).

Belongs to the SlyX family.

The protein is Protein SlyX homolog of Shewanella loihica (strain ATCC BAA-1088 / PV-4).